The following is a 463-amino-acid chain: ATP synthase subunit beta (463 aa).

An ATP-binding site is contributed by 151–158; the sequence is GGAGVGKT.

Belongs to the ATPase alpha/beta chains family. As to quaternary structure, F-type ATPases have 2 components, CF(1) - the catalytic core - and CF(0) - the membrane proton channel. CF(1) has five subunits: alpha(3), beta(3), gamma(1), delta(1), epsilon(1). CF(0) has three main subunits: a(1), b(2) and c(9-12). The alpha and beta chains form an alternating ring which encloses part of the gamma chain. CF(1) is attached to CF(0) by a central stalk formed by the gamma and epsilon chains, while a peripheral stalk is formed by the delta and b chains.

Its subcellular location is the cell membrane. The catalysed reaction is ATP + H2O + 4 H(+)(in) = ADP + phosphate + 5 H(+)(out). Produces ATP from ADP in the presence of a proton gradient across the membrane. The catalytic sites are hosted primarily by the beta subunits. The polypeptide is ATP synthase subunit beta (Clostridium botulinum (strain ATCC 19397 / Type A)).